Consider the following 174-residue polypeptide: ATP synthase subunit delta, sodium ion specific (174 aa).

The protein belongs to the ATPase delta chain family. F-type ATPases have 2 components, F(1) - the catalytic core - and F(0) - the membrane proton channel. F(1) has five subunits: alpha(3), beta(3), gamma(1), delta(1), epsilon(1). F(0) has three main subunits: a(1), b(2) and c(10-14). The alpha and beta chains form an alternating ring which encloses part of the gamma chain. F(1) is attached to F(0) by a central stalk formed by the gamma and epsilon chains, while a peripheral stalk is formed by the delta and b chains.

It is found in the cell inner membrane. In terms of biological role, f(1)F(0) ATP synthase produces ATP from ADP in the presence of a proton or sodium gradient. F-type ATPases consist of two structural domains, F(1) containing the extramembraneous catalytic core and F(0) containing the membrane proton channel, linked together by a central stalk and a peripheral stalk. During catalysis, ATP synthesis in the catalytic domain of F(1) is coupled via a rotary mechanism of the central stalk subunits to proton translocation. Functionally, this protein is part of the stalk that links CF(0) to CF(1). It either transmits conformational changes from CF(0) to CF(1) or is implicated in proton conduction. The protein is ATP synthase subunit delta, sodium ion specific of Ilyobacter tartaricus.